The primary structure comprises 130 residues: Histone H2A type 2-B (130 aa).

Positions 1-22 (MSGRGKQGGKARAKAKSRSSRA) are disordered. The residue at position 2 (Ser-2) is an N-acetylserine. Ser-2 bears the Phosphoserine; by RPS6KA5 mark. Arg-4 is modified (citrulline; alternate). At Arg-4 the chain carries Symmetric dimethylarginine; by PRMT5; alternate. N6-(2-hydroxyisobutyryl)lysine; alternate occurs at positions 6 and 10. Lys-6 carries the post-translational modification N6-(beta-hydroxybutyryl)lysine; alternate. The span at 7–19 (QGGKARAKAKSRS) shows a compositional bias: basic residues. Lys-10 is subject to N6-lactoyllysine; alternate. At Lys-10 the chain carries N6-succinyllysine; alternate. Residues Lys-14 and Lys-16 each participate in a glycyl lysine isopeptide (Lys-Gly) (interchain with G-Cter in ubiquitin) cross-link. Lys-37 carries the post-translational modification N6-(2-hydroxyisobutyryl)lysine; alternate. Lys-37 carries the N6-(beta-hydroxybutyryl)lysine; alternate modification. Lys-37 carries the N6-crotonyllysine; alternate modification. N6-(2-hydroxyisobutyryl)lysine occurs at positions 75 and 76. Residue Lys-96 is modified to N6-(2-hydroxyisobutyryl)lysine; alternate. Lys-96 carries the N6-succinyllysine; alternate modification. Lys-96 carries the post-translational modification N6-glutaryllysine; alternate. Gln-105 carries the post-translational modification N5-methylglutamine. Lys-119 carries the post-translational modification N6-(2-hydroxyisobutyryl)lysine; alternate. Lys-119 and Lys-120 each carry N6-crotonyllysine; alternate. N6-glutaryllysine; alternate occurs at positions 119 and 120. Lys-120 carries the post-translational modification N6-(beta-hydroxybutyryl)lysine; alternate. A Glycyl lysine isopeptide (Lys-Gly) (interchain with G-Cter in ubiquitin); alternate cross-link involves residue Lys-120. Position 121 is a phosphothreonine; by DCAF1 (Thr-121).

This sequence belongs to the histone H2A family. The nucleosome is a histone octamer containing two molecules each of H2A, H2B, H3 and H4 assembled in one H3-H4 heterotetramer and two H2A-H2B heterodimers. The octamer wraps approximately 147 bp of DNA. Post-translationally, deiminated on Arg-4 in granulocytes upon calcium entry. In terms of processing, monoubiquitination of Lys-120 (H2AK119Ub) by RING1, TRIM37 and RNF2/RING2 complex gives a specific tag for epigenetic transcriptional repression and participates in X chromosome inactivation of female mammals. It is involved in the initiation of both imprinted and random X inactivation. Ubiquitinated H2A is enriched in inactive X chromosome chromatin. Ubiquitination of H2A functions downstream of methylation of 'Lys-27' of histone H3 (H3K27me). H2AK119Ub by RNF2/RING2 can also be induced by ultraviolet and may be involved in DNA repair. Following DNA double-strand breaks (DSBs), it is ubiquitinated through 'Lys-63' linkage of ubiquitin moieties by the E2 ligase UBE2N and the E3 ligases RNF8 and RNF168, leading to the recruitment of repair proteins to sites of DNA damage. Ubiquitination at Lys-14 and Lys-16 (H2AK13Ub and H2AK15Ub, respectively) in response to DNA damage is initiated by RNF168 that mediates monoubiquitination at these 2 sites, and 'Lys-63'-linked ubiquitin are then conjugated to monoubiquitin; RNF8 is able to extend 'Lys-63'-linked ubiquitin chains in vitro. Deubiquitinated by USP51 at Lys-14 and Lys-16 (H2AK13Ub and H2AK15Ub, respectively) after damaged DNA is repaired. H2AK119Ub and ionizing radiation-induced 'Lys-63'-linked ubiquitination (H2AK13Ub and H2AK15Ub) are distinct events. Phosphorylation on Ser-2 (H2AS1ph) is enhanced during mitosis. Phosphorylation on Ser-2 by RPS6KA5/MSK1 directly represses transcription. Acetylation of H3 inhibits Ser-2 phosphorylation by RPS6KA5/MSK1. Phosphorylation at Thr-121 (H2AT120ph) by DCAF1 is present in the regulatory region of many tumor suppresor genes and down-regulates their transcription. Post-translationally, symmetric dimethylation on Arg-4 by the PRDM1/PRMT5 complex may play a crucial role in the germ-cell lineage. In terms of processing, glutamine methylation at Gln-105 (H2AQ104me) by FBL is specifically dedicated to polymerase I. It is present at 35S ribosomal DNA locus and impairs binding of the FACT complex. Crotonylation (Kcr) is specifically present in male germ cells and marks testis-specific genes in post-meiotic cells, including X-linked genes that escape sex chromosome inactivation in haploid cells. Crotonylation marks active promoters and enhancers and confers resistance to transcriptional repressors. It is also associated with post-meiotically activated genes on autosomes. Post-translationally, hydroxybutyrylation of histones is induced by starvation. In terms of processing, lactylated in macrophages by EP300/P300 by using lactoyl-CoA directly derived from endogenous or exogenous lactate, leading to stimulates gene transcription.

The protein localises to the nucleus. It is found in the chromosome. Functionally, core component of nucleosome. Nucleosomes wrap and compact DNA into chromatin, limiting DNA accessibility to the cellular machineries which require DNA as a template. Histones thereby play a central role in transcription regulation, DNA repair, DNA replication and chromosomal stability. DNA accessibility is regulated via a complex set of post-translational modifications of histones, also called histone code, and nucleosome remodeling. This is Histone H2A type 2-B from Mus musculus (Mouse).